We begin with the raw amino-acid sequence, 271 residues long: Chymotrypsin BII (271 aa).

Positions 1–15 (MIGKLSLLLVCVAVA) are cleaved as a signal peptide. The propeptide at 16 to 45 (SGNPAAGKPWHWKSPKPLVDPRIHVNATPR) is activation peptide. Positions 46–268 (IVGGVEATPH…YLDWIEQKTG (223 aa)) constitute a Peptidase S1 domain. An intrachain disulfide couples Cys71 to Cys87. Catalysis depends on charge relay system residues His86 and Asp132. Intrachain disulfides connect Cys196–Cys209 and Cys219–Cys245. The Charge relay system role is filled by Ser223.

This sequence belongs to the peptidase S1 family.

The protein resides in the secreted. It localises to the extracellular space. It catalyses the reaction Preferential cleavage: Tyr-|-Xaa, Trp-|-Xaa, Phe-|-Xaa, Leu-|-Xaa.. Its function is as follows. Serine protease with chymotryptic and collagenolytic activities. This Penaeus vannamei (Whiteleg shrimp) protein is Chymotrypsin BII.